The primary structure comprises 149 residues: Calmodulin-1 (149 aa).

A2 is subject to N-acetylalanine. EF-hand domains lie at 8 to 43 (DQIAEFKEAFSLFDKDGDGCITTKELGTVMRSLGQN), 44 to 79 (PTEAELQDMINEVDADGNGTIDFPEFLNLMARKMKD), 81 to 116 (DSEEELKEAFRVFDKDQNGFISAAELRHVMTNLGEK), and 117 to 149 (LTDEEVDEMIREADVDGDGQINYEEFVKVMMAK). Positions 21, 23, 25, 27, 32, 57, 59, 61, 63, 68, 94, 96, 98, and 105 each coordinate Ca(2+). An N6,N6,N6-trimethyllysine modification is found at K116. Ca(2+) is bound by residues D130, D132, D134, Q136, and E141.

Belongs to the calmodulin family.

Calmodulin mediates the control of a large number of enzymes, ion channels and other proteins by Ca(2+). Among the enzymes to be stimulated by the calmodulin-Ca(2+) complex are a number of protein kinases and phosphatases. In Oryza sativa subsp. indica (Rice), this protein is Calmodulin-1 (CAM1-1).